Consider the following 237-residue polypeptide: Probable glutathione-independent glyoxalase HSP32 (237 aa).

Active-site residues include C138, H139, and E170.

This sequence belongs to the peptidase C56 family. HSP31-like subfamily. As to quaternary structure, homodimer.

Its subcellular location is the cytoplasm. The protein resides in the P-body. The catalysed reaction is methylglyoxal + H2O = (R)-lactate + H(+). Catalyzes the conversion of methylglyoxal (MG) to D-lactate in a single glutathione (GSH)-independent step. May play a role in detoxifying endogenously produced glyoxals. Involved in protection against reactive oxygen species (ROS). Important for viability in stationary phase. May negatively regulate TORC1 in response to nutrient limitation. The protein is Probable glutathione-independent glyoxalase HSP32 of Saccharomyces cerevisiae (strain ATCC 204508 / S288c) (Baker's yeast).